We begin with the raw amino-acid sequence, 577 residues long: MDRAVSQVALENDEREAKNTWRLIFRIAILLLTVVTLATSVASLVYSMGASTPSDLVGIPTRISRAEEKITSALGSNQDVVDRIYKQVALESPLALLNTETTIMNAITSLSYQINGAANNSGWGAPIHDPDFIGGIGKELIVDDASDVTSFYPSAFQEHLNFIPAPTTGSGCTRIPSFDMSATHYCYTHNVILSGCRDHSHSHQYLALGVLRTTATGRIFFSTLRSISLDDTQNRKSCSVSATPLGCDMLCSKVTETEEEDYNSAVPTLMAHGRLGFDGQYHEKDLDVTTLFEDWVANYPGVGGGSFIDGRVWFSVYGGLKPNSPSDTVQEGKYVIYKRYNDTCPDEQDYQIRMAKSSYKPGRFGGKRIQQAILSIKVSTSLGEDPVLTVPPNTVTLMGAEGRILTVGTSHFLYQRGSSYFSPALLYPMTVSNKTATLHSPYTFNAFTRPGSIPCQASARCPNSCVTGVYTDPYPLIFYRNHTLRGVFGTMLDSEQARLNPTSAVFDSTSRSRITRVSSSSTKAAYTTSTCFKVVKTNKTYCLSIAEISNTLFGEFRIVPLLVEILKNDGVREARSG.

Met-1 is subject to Blocked amino end (Met); by host. Topologically, residues 1–26 (MDRAVSQVALENDEREAKNTWRLIFR) are intravirion. The helical transmembrane segment at 27 to 48 (IAILLLTVVTLATSVASLVYSM) threads the bilayer. The Virion surface segment spans residues 49 to 577 (GASTPSDLVG…NDGVREARSG (529 aa)). N-linked (GlcNAc...) asparagine; by host glycosylation is present at Asn-119. The interval 124–152 (GAPIHDPDFIGGIGKELIVDDASDVTSFY) is important for interaction with fusion/F protein. 3 cysteine pairs are disulfide-bonded: Cys-172-Cys-196, Cys-186-Cys-247, and Cys-238-Cys-251. Residues 234-239 (NRKSCS) form an involved in neuraminidase activity region. 2 N-linked (GlcNAc...) asparagine; by host glycosylation sites follow: Asn-341 and Asn-433. Intrachain disulfides connect Cys-344–Cys-461 and Cys-455–Cys-465. Residues Asn-481 and Asn-538 are each glycosylated (N-linked (GlcNAc...) asparagine; by host). The cysteines at positions 531 and 542 are disulfide-linked.

Belongs to the paramyxoviruses hemagglutinin-neuraminidase family. As to quaternary structure, homotetramer; composed of disulfide-linked homodimers. Interacts with F protein trimer. Interacts with host CG-1B; this interaction inhibits viral adsorption and replication rather than internalization.

Its subcellular location is the virion membrane. It localises to the host cell membrane. It carries out the reaction Hydrolysis of alpha-(2-&gt;3)-, alpha-(2-&gt;6)-, alpha-(2-&gt;8)- glycosidic linkages of terminal sialic acid residues in oligosaccharides, glycoproteins, glycolipids, colominic acid and synthetic substrates.. Its function is as follows. Mediates the viral entry into the host cell together with fusion/F protein. Attaches the virus to sialic acid-containing cell receptors and thereby initiates infection. Binding of HN protein to the receptor induces a conformational change that allows the F protein to trigger virion/cell membranes fusion. Neuraminidase activity ensures the efficient spread of the virus by dissociating the mature virions from the neuraminic acid containing glycoproteins. This is Hemagglutinin-neuraminidase (HN) from Gallus gallus (Chicken).